The following is a 165-amino-acid chain: MLAVIRIRGRTGIKEDIADTAHLMRLNRINHLVLLNENEVVKGMLQKVKDYVTWGEIDLDTLELLLKNRLLFRGRKHLTEEELKEKTGFTSYRDLAQALIDGKIKPSEIADAVPVIRLNPPKGGYEAIRKSYRSGGSSGYRGSDINQLIRRMIISGVDLNGKREN.

The protein belongs to the universal ribosomal protein uL30 family. Part of the 50S ribosomal subunit.

The sequence is that of Large ribosomal subunit protein uL30 from Thermoplasma acidophilum (strain ATCC 25905 / DSM 1728 / JCM 9062 / NBRC 15155 / AMRC-C165).